A 621-amino-acid polypeptide reads, in one-letter code: uncharacterized protein (621 aa).

Belongs to the chlamydial CPn_0512/CT_425/TC_0708 family.

This is an uncharacterized protein from Chlamydia muridarum (strain MoPn / Nigg).